The following is a 109-amino-acid chain: Juvenile hormone esterase, isoform A (109 aa).

Belongs to the type-B carboxylesterase/lipase family. In terms of tissue distribution, fat body, the site of their biosynthesis, and the hemolymph where it is secreted.

The enzyme catalyses juvenile hormone I + H2O = juvenile hormone I carboxylate + methanol + H(+). It catalyses the reaction juvenile hormone III + H2O = juvenile hormone III carboxylate + methanol + H(+). In terms of biological role, JH esterase plays a crucial role in the decrease of JH activity in lepidopteran insects, by hydrolyzing the methyl ester of JH. It is also involved in the transport of JH. This Trichoplusia ni (Cabbage looper) protein is Juvenile hormone esterase, isoform A.